A 313-amino-acid chain; its full sequence is Beta-ketoacyl-[acyl-carrier-protein] synthase III (313 aa).

Residues cysteine 112 and histidine 238 contribute to the active site. An ACP-binding region spans residues 239–243; the sequence is QANIR. Residue asparagine 268 is part of the active site.

The protein belongs to the thiolase-like superfamily. FabH family. In terms of assembly, homodimer.

It localises to the cytoplasm. It carries out the reaction malonyl-[ACP] + acetyl-CoA + H(+) = 3-oxobutanoyl-[ACP] + CO2 + CoA. It functions in the pathway lipid metabolism; fatty acid biosynthesis. In terms of biological role, catalyzes the condensation reaction of fatty acid synthesis by the addition to an acyl acceptor of two carbons from malonyl-ACP. Catalyzes the first condensation reaction which initiates fatty acid synthesis and may therefore play a role in governing the total rate of fatty acid production. Possesses both acetoacetyl-ACP synthase and acetyl transacylase activities. Its substrate specificity determines the biosynthesis of branched-chain and/or straight-chain of fatty acids. This Staphylococcus haemolyticus (strain JCSC1435) protein is Beta-ketoacyl-[acyl-carrier-protein] synthase III.